Reading from the N-terminus, the 336-residue chain is Coproporphyrin III ferrochelatase (336 aa).

Fe-coproporphyrin III-binding residues include Ser-52 and Tyr-116. Residues His-176 and Glu-259 each contribute to the Fe(2+) site.

This sequence belongs to the ferrochelatase family.

It is found in the cytoplasm. The enzyme catalyses Fe-coproporphyrin III + 2 H(+) = coproporphyrin III + Fe(2+). It functions in the pathway porphyrin-containing compound metabolism; protoheme biosynthesis. Its function is as follows. Involved in coproporphyrin-dependent heme b biosynthesis. Catalyzes the insertion of ferrous iron into coproporphyrin III to form Fe-coproporphyrin III. The chain is Coproporphyrin III ferrochelatase from Mycobacterium leprae (strain Br4923).